The chain runs to 118 residues: Small ribosomal subunit protein uS13 (118 aa).

Residues 94 to 118 (GLPVRGQRTKTNARTRKGPRKPIKK) form a disordered region.

It belongs to the universal ribosomal protein uS13 family. In terms of assembly, part of the 30S ribosomal subunit. Forms a loose heterodimer with protein S19. Forms two bridges to the 50S subunit in the 70S ribosome.

Located at the top of the head of the 30S subunit, it contacts several helices of the 16S rRNA. In the 70S ribosome it contacts the 23S rRNA (bridge B1a) and protein L5 of the 50S subunit (bridge B1b), connecting the 2 subunits; these bridges are implicated in subunit movement. Contacts the tRNAs in the A and P-sites. The polypeptide is Small ribosomal subunit protein uS13 (Haemophilus ducreyi (strain 35000HP / ATCC 700724)).